The sequence spans 224 residues: 7-cyano-7-deazaguanine synthase (224 aa).

Leu-10 to Val-20 is a binding site for ATP. Residues Cys-189, Cys-199, Cys-202, and Cys-205 each contribute to the Zn(2+) site.

Belongs to the QueC family. Zn(2+) is required as a cofactor.

It carries out the reaction 7-carboxy-7-deazaguanine + NH4(+) + ATP = 7-cyano-7-deazaguanine + ADP + phosphate + H2O + H(+). Its pathway is purine metabolism; 7-cyano-7-deazaguanine biosynthesis. Functionally, catalyzes the ATP-dependent conversion of 7-carboxy-7-deazaguanine (CDG) to 7-cyano-7-deazaguanine (preQ(0)). This is 7-cyano-7-deazaguanine synthase from Pseudomonas putida (strain ATCC 700007 / DSM 6899 / JCM 31910 / BCRC 17059 / LMG 24140 / F1).